We begin with the raw amino-acid sequence, 623 residues long: Isocitrate dehydrogenase kinase/phosphatase (623 aa).

ATP is bound by residues Ala344–Met350 and Lys365. The active site involves Asp400.

It belongs to the AceK family.

Its subcellular location is the cytoplasm. The catalysed reaction is L-seryl-[isocitrate dehydrogenase] + ATP = O-phospho-L-seryl-[isocitrate dehydrogenase] + ADP + H(+). Bifunctional enzyme which can phosphorylate or dephosphorylate isocitrate dehydrogenase (IDH) on a specific serine residue. This is a regulatory mechanism which enables bacteria to bypass the Krebs cycle via the glyoxylate shunt in response to the source of carbon. When bacteria are grown on glucose, IDH is fully active and unphosphorylated, but when grown on acetate or ethanol, the activity of IDH declines drastically concomitant with its phosphorylation. This is Isocitrate dehydrogenase kinase/phosphatase from Polaromonas naphthalenivorans (strain CJ2).